A 717-amino-acid chain; its full sequence is Delta-1-pyrroline-5-carboxylate synthase (717 aa).

The segment at 1-296 (METVDSTRAF…WASIGETDAR (296 aa)) is glutamate 5-kinase. The substrate site is built by serine 60, aspartate 157, and asparagine 176. Residues 196–197 (SD) and 236–242 (RGGMTAK) each bind ATP. Positions 297-717 (EMAVAARACS…YSHKDLTQQG (421 aa)) are gamma-glutamyl phosphate reductase.

This sequence in the N-terminal section; belongs to the glutamate 5-kinase family. In the C-terminal section; belongs to the gamma-glutamyl phosphate reductase family. As to expression, expressed at high levels in leaves and is inducible in roots subjected to salt stress.

The catalysed reaction is L-glutamate + ATP = L-glutamyl 5-phosphate + ADP. The enzyme catalyses L-glutamate 5-semialdehyde + phosphate + NADP(+) = L-glutamyl 5-phosphate + NADPH + H(+). It functions in the pathway amino-acid biosynthesis; L-proline biosynthesis; L-glutamate 5-semialdehyde from L-glutamate: step 1/2. Its pathway is amino-acid biosynthesis; L-proline biosynthesis; L-glutamate 5-semialdehyde from L-glutamate: step 2/2. Feedback regulated by proline. P5CS plays a key role in proline biosynthesis, leading to osmoregulation in plants. The sequence is that of Delta-1-pyrroline-5-carboxylate synthase (PRO2) from Solanum lycopersicum (Tomato).